Here is a 960-residue protein sequence, read N- to C-terminus: UvrABC system protein A (960 aa).

35–42 (GLSGSGKS) contributes to the ATP binding site. The C4-type zinc-finger motif lies at 270–297 (CAHCNVSVPELQPRLFSFNAPFGACPSC). ABC transporter domains lie at 327–605 (FKPE…QASL) and 625–953 (GNGN…WYIK). Residue 657–664 (GVSGSGKS) coordinates ATP. A C4-type zinc finger spans residues 756–782 (CEHCKGDGVITIEMNFLPDVYITCDVC).

The protein belongs to the ABC transporter superfamily. UvrA family. As to quaternary structure, forms a heterotetramer with UvrB during the search for lesions.

The protein localises to the cytoplasm. In terms of biological role, the UvrABC repair system catalyzes the recognition and processing of DNA lesions. UvrA is an ATPase and a DNA-binding protein. A damage recognition complex composed of 2 UvrA and 2 UvrB subunits scans DNA for abnormalities. When the presence of a lesion has been verified by UvrB, the UvrA molecules dissociate. This is UvrABC system protein A from Treponema pallidum (strain Nichols).